Here is a 309-residue protein sequence, read N- to C-terminus: Tagatose-6-phosphate kinase (309 aa).

It belongs to the carbohydrate kinase PfkB family. LacC subfamily.

The catalysed reaction is D-tagatofuranose 6-phosphate + ATP = D-tagatofuranose 1,6-bisphosphate + ADP + H(+). It participates in carbohydrate metabolism; D-tagatose 6-phosphate degradation; D-glyceraldehyde 3-phosphate and glycerone phosphate from D-tagatose 6-phosphate: step 1/2. This chain is Tagatose-6-phosphate kinase, found in Streptococcus pyogenes serotype M28 (strain MGAS6180).